Consider the following 518-residue polypeptide: Glucose-6-phosphate 1-dehydrogenase (518 aa).

NADP(+) is bound by residues 36-43, arginine 70, and lysine 169; that span reads GASGDLAK. D-glucose 6-phosphate is bound by residues lysine 169, 199 to 203, glutamate 237, and aspartate 256; that span reads HYLGK. The active-site Proton acceptor is the histidine 261. An NADP(+)-binding site is contributed by arginine 356. 2 residues coordinate D-glucose 6-phosphate: lysine 359 and arginine 364. Residues lysine 365, arginine 369, and arginine 392 each contribute to the NADP(+) site. Glutamine 394 is a D-glucose 6-phosphate binding site. NADP(+) contacts are provided by residues 400–402, 420–422, arginine 486, tyrosine 502, and tryptophan 508; these read YFK and DLT.

It belongs to the glucose-6-phosphate dehydrogenase family.

Its subcellular location is the cytoplasm. It localises to the cytosol. The catalysed reaction is D-glucose 6-phosphate + NADP(+) = 6-phospho-D-glucono-1,5-lactone + NADPH + H(+). The protein operates within carbohydrate degradation; pentose phosphate pathway; D-ribulose 5-phosphate from D-glucose 6-phosphate (oxidative stage): step 1/3. Functionally, cytosolic glucose-6-phosphate dehydrogenase that catalyzes the first and rate-limiting step of the oxidative branch within the pentose phosphate pathway/shunt, an alternative route to glycolysis for the dissimilation of carbohydrates and a major source of reducing power and metabolic intermediates for fatty acid and nucleic acid biosynthetic processes. The sequence is that of Glucose-6-phosphate 1-dehydrogenase (Zw) from Drosophila yakuba (Fruit fly).